Here is a 337-residue protein sequence, read N- to C-terminus: Heat-inducible transcription repressor HrcA (337 aa).

The protein belongs to the HrcA family.

Functionally, negative regulator of class I heat shock genes (grpE-dnaK-dnaJ and groELS operons). Prevents heat-shock induction of these operons. The polypeptide is Heat-inducible transcription repressor HrcA (Kocuria rhizophila (strain ATCC 9341 / DSM 348 / NBRC 103217 / DC2201)).